We begin with the raw amino-acid sequence, 396 residues long: S100P-binding protein (396 aa).

The interval 145–249 (CDPVLDKDKI…RKNSGSHKSG (105 aa)) is disordered. Composition is skewed to basic and acidic residues over residues 148–161 (VLDK…KETE) and 168–185 (EQTR…RCTE). 2 stretches are compositionally biased toward polar residues: residues 202–215 (SSPS…TASD) and 227–246 (VFSQ…SGSH).

As to quaternary structure, interacts with S100P.

The protein localises to the nucleus. The chain is S100P-binding protein from Mus musculus (Mouse).